We begin with the raw amino-acid sequence, 496 residues long: GPI mannosyltransferase 4 (496 aa).

The next 3 helical transmembrane spans lie at 5-25 (LIWLLPAIGLVVALQPSYIHP), 56-73 (ARSYFPLYAFYGPLFYLM), and 85-105 (ILRIIRFYNFMLYLSVLYYAL). Asn156 carries an N-linked (GlcNAc...) asparagine glycan. A run of 6 helical transmembrane segments spans residues 174-194 (GFLISVGTFTRISFPAFLLLP), 207-227 (WIQMVVIAVSMTLSTSIIVYF), 261-281 (PRYTHLLVNIPLILGPGLLMI), 286-306 (NDFLNLPLLSIISSLFFLSAL), 311-328 (LRFLLPVVPLFSTLLTRF), and 337-357 (IWLVFNAAMCIIMGIFHQGGV). N-linked (GlcNAc...) asparagine glycosylation occurs at Asn459.

Belongs to the glycosyltransferase 22 family. PIGZ subfamily.

It is found in the endoplasmic reticulum membrane. It functions in the pathway glycolipid biosynthesis; glycosylphosphatidylinositol-anchor biosynthesis. In terms of biological role, alpha-1,2-mannosyltransferase involved in glycosylphosphatidylinositol-anchor biosynthesis. Transfers a fourth mannose to trimannosyl-GPIs during GPI precursor assembly. The presence of a fourth mannose in GPI is essential in fungi. This Candida glabrata (strain ATCC 2001 / BCRC 20586 / JCM 3761 / NBRC 0622 / NRRL Y-65 / CBS 138) (Yeast) protein is GPI mannosyltransferase 4 (SMP3).